The primary structure comprises 147 residues: Hemoglobin subunit gamma-2 (147 aa).

The region spanning 3-147 is the Globin domain; sequence HFTEEDKATI…VASALSSRYH (145 aa). Thr-13 is subject to Phosphothreonine. Ser-45, Ser-51, and Ser-53 each carry phosphoserine. Residue Lys-60 is modified to N6-acetyllysine. His-64 serves as a coordination point for heme b. At Lys-83 the chain carries N6-acetyllysine. His-93 serves as a coordination point for heme b. Cys-94 carries the post-translational modification S-nitrosocysteine. Phosphoserine occurs at positions 140, 143, and 144.

This sequence belongs to the globin family. As to quaternary structure, heterotetramer of two alpha chains and two gamma chains in fetal hemoglobin (Hb F). In terms of tissue distribution, red blood cells.

Its function is as follows. Gamma chains make up the fetal hemoglobin F, in combination with alpha chains. This Pongo pygmaeus (Bornean orangutan) protein is Hemoglobin subunit gamma-2 (HBG2).